The following is a 215-amino-acid chain: ATP phosphoribosyltransferase (215 aa).

This sequence belongs to the ATP phosphoribosyltransferase family. Short subfamily. In terms of assembly, heteromultimer composed of HisG and HisZ subunits.

It is found in the cytoplasm. It carries out the reaction 1-(5-phospho-beta-D-ribosyl)-ATP + diphosphate = 5-phospho-alpha-D-ribose 1-diphosphate + ATP. The protein operates within amino-acid biosynthesis; L-histidine biosynthesis; L-histidine from 5-phospho-alpha-D-ribose 1-diphosphate: step 1/9. Its function is as follows. Catalyzes the condensation of ATP and 5-phosphoribose 1-diphosphate to form N'-(5'-phosphoribosyl)-ATP (PR-ATP). Has a crucial role in the pathway because the rate of histidine biosynthesis seems to be controlled primarily by regulation of HisG enzymatic activity. This chain is ATP phosphoribosyltransferase, found in Lachnoclostridium phytofermentans (strain ATCC 700394 / DSM 18823 / ISDg) (Clostridium phytofermentans).